Reading from the N-terminus, the 1072-residue chain is Carbamoyl phosphate synthase large chain (1072 aa).

The segment at 1–401 is carboxyphosphate synthetic domain; it reads MPKYKDISKV…SLLKAVRSLE (401 aa). The ATP site is built by R129, R169, G175, G176, K208, L210, E215, G241, V242, H243, Q284, and E298. Positions 133–327 constitute an ATP-grasp 1 domain; it reads KRKMQEIGEP…IAKIAAKIAI (195 aa). Residues Q284, E298, and N300 each contribute to the Mg(2+) site. Q284, E298, and N300 together coordinate Mn(2+). The interval 402–544 is oligomerization domain; the sequence is IKAYGLRLDS…YIYSTYCEED (143 aa). The carbamoyl phosphate synthetic domain stretch occupies residues 545 to 929; it reads EVETHDIPKV…ALYKALEGAG (385 aa). Residues 671-861 enclose the ATP-grasp 2 domain; it reads SKLLKELNIN…MVKLAVEVAL (191 aa). ATP-binding residues include R707, K746, I748, E752, G777, V778, H779, S780, Q820, and E832. Mg(2+) is bound by residues Q820, E832, and N834. Residues Q820, E832, and N834 each coordinate Mn(2+). An MGS-like domain is found at 930-1072; that stretch reads LKIPKKGKIL…QKDNVKNLVL (143 aa). Residues 930-1072 form an allosteric domain region; it reads LKIPKKGKIL…QKDNVKNLVL (143 aa).

This sequence belongs to the CarB family. As to quaternary structure, composed of two chains; the small (or glutamine) chain promotes the hydrolysis of glutamine to ammonia, which is used by the large (or ammonia) chain to synthesize carbamoyl phosphate. Tetramer of heterodimers (alpha,beta)4. Mg(2+) is required as a cofactor. It depends on Mn(2+) as a cofactor.

The catalysed reaction is hydrogencarbonate + L-glutamine + 2 ATP + H2O = carbamoyl phosphate + L-glutamate + 2 ADP + phosphate + 2 H(+). It carries out the reaction hydrogencarbonate + NH4(+) + 2 ATP = carbamoyl phosphate + 2 ADP + phosphate + 2 H(+). It functions in the pathway amino-acid biosynthesis; L-arginine biosynthesis; carbamoyl phosphate from bicarbonate: step 1/1. Its pathway is pyrimidine metabolism; UMP biosynthesis via de novo pathway; (S)-dihydroorotate from bicarbonate: step 1/3. Its function is as follows. Large subunit of the glutamine-dependent carbamoyl phosphate synthetase (CPSase). CPSase catalyzes the formation of carbamoyl phosphate from the ammonia moiety of glutamine, carbonate, and phosphate donated by ATP, constituting the first step of 2 biosynthetic pathways, one leading to arginine and/or urea and the other to pyrimidine nucleotides. The large subunit (synthetase) binds the substrates ammonia (free or transferred from glutamine from the small subunit), hydrogencarbonate and ATP and carries out an ATP-coupled ligase reaction, activating hydrogencarbonate by forming carboxy phosphate which reacts with ammonia to form carbamoyl phosphate. In Caldanaerobacter subterraneus subsp. tengcongensis (strain DSM 15242 / JCM 11007 / NBRC 100824 / MB4) (Thermoanaerobacter tengcongensis), this protein is Carbamoyl phosphate synthase large chain.